Reading from the N-terminus, the 190-residue chain is Orotate phosphoribosyltransferase (190 aa).

114 to 122 (EDVITTGGS) provides a ligand contact to 5-phospho-alpha-D-ribose 1-diphosphate. Threonine 118 and arginine 146 together coordinate orotate.

It belongs to the purine/pyrimidine phosphoribosyltransferase family. PyrE subfamily. As to quaternary structure, homodimer. Requires Mg(2+) as cofactor.

The catalysed reaction is orotidine 5'-phosphate + diphosphate = orotate + 5-phospho-alpha-D-ribose 1-diphosphate. The protein operates within pyrimidine metabolism; UMP biosynthesis via de novo pathway; UMP from orotate: step 1/2. Its function is as follows. Catalyzes the transfer of a ribosyl phosphate group from 5-phosphoribose 1-diphosphate to orotate, leading to the formation of orotidine monophosphate (OMP). This is Orotate phosphoribosyltransferase from Caldicellulosiruptor bescii (strain ATCC BAA-1888 / DSM 6725 / KCTC 15123 / Z-1320) (Anaerocellum thermophilum).